A 357-amino-acid polypeptide reads, in one-letter code: GTPase Obg (357 aa).

The region spanning 1-159 (MKFVDEAEIQ…RTLKLELKLL (159 aa)) is the Obg domain. The OBG-type G domain occupies 160 to 343 (ADIGMLGFPN…IMKSAMTLFE (184 aa)). GTP contacts are provided by residues 166 to 173 (GFPNVGKS), 191 to 195 (FTTLY), 213 to 216 (DVPG), 293 to 296 (NKAD), and 324 to 326 (SAV). Ser-173 and Thr-193 together coordinate Mg(2+).

Belongs to the TRAFAC class OBG-HflX-like GTPase superfamily. OBG GTPase family. In terms of assembly, monomer. The cofactor is Mg(2+).

It localises to the cytoplasm. In terms of biological role, an essential GTPase which binds GTP, GDP and possibly (p)ppGpp with moderate affinity, with high nucleotide exchange rates and a fairly low GTP hydrolysis rate. Plays a role in control of the cell cycle, stress response, ribosome biogenesis and in those bacteria that undergo differentiation, in morphogenesis control. In Xylella fastidiosa (strain 9a5c), this protein is GTPase Obg.